Here is a 131-residue protein sequence, read N- to C-terminus: Holo-[acyl-carrier-protein] synthase (131 aa).

The Mg(2+) site is built by D8 and E62.

Belongs to the P-Pant transferase superfamily. AcpS family. The cofactor is Mg(2+).

It is found in the cytoplasm. The enzyme catalyses apo-[ACP] + CoA = holo-[ACP] + adenosine 3',5'-bisphosphate + H(+). Transfers the 4'-phosphopantetheine moiety from coenzyme A to a Ser of acyl-carrier-protein. This chain is Holo-[acyl-carrier-protein] synthase, found in Delftia acidovorans (strain DSM 14801 / SPH-1).